A 317-amino-acid polypeptide reads, in one-letter code: MGIDQRPLAIAVMGPTASGKTATAIALARQLDGEIVSVDSALVYRHLDIGSAKPDAAERAQAPHHLLDLRDPWQTYSAAEFAADASRVVVDIVARGKMPILAGGTGLYFRALLQGLSPMPEADPAMRAALAAEAAERGWAALHAELAQIDPAAATRIHATDPQRIQRALEVYRLTGTPITEWQRRPGVAPLPVRTLKLILAPHDRAVLHQRIEARFDAMLAQGFLDEVRALRAMPEMAAVEAPLDLPAVRAVGYRQAWEYLDGEGDAARFRDKAIFATRQLAKRQLTWLRGELDARWFDPHIDQERLAGAVSTFVAR.

Residue 14–21 (GPTASGKT) participates in ATP binding. 16–21 (TASGKT) serves as a coordination point for substrate. Interaction with substrate tRNA stretches follow at residues 39 to 42 (DSAL) and 163 to 167 (QRIQR).

This sequence belongs to the IPP transferase family. As to quaternary structure, monomer. Mg(2+) is required as a cofactor.

It catalyses the reaction adenosine(37) in tRNA + dimethylallyl diphosphate = N(6)-dimethylallyladenosine(37) in tRNA + diphosphate. Catalyzes the transfer of a dimethylallyl group onto the adenine at position 37 in tRNAs that read codons beginning with uridine, leading to the formation of N6-(dimethylallyl)adenosine (i(6)A). This Stenotrophomonas maltophilia (strain R551-3) protein is tRNA dimethylallyltransferase.